The primary structure comprises 338 residues: Fructose-1,6-bisphosphatase class 1 1 (338 aa).

Mg(2+)-binding residues include Glu88, Asp107, Leu109, and Asp110. Substrate contacts are provided by residues 110-113 (DGSS) and Asn196. Residue Glu268 participates in Mg(2+) binding.

The protein belongs to the FBPase class 1 family. Homotetramer. Mg(2+) serves as cofactor.

Its subcellular location is the cytoplasm. The enzyme catalyses beta-D-fructose 1,6-bisphosphate + H2O = beta-D-fructose 6-phosphate + phosphate. The protein operates within carbohydrate biosynthesis; Calvin cycle. In Bradyrhizobium sp. (strain BTAi1 / ATCC BAA-1182), this protein is Fructose-1,6-bisphosphatase class 1 1.